Here is a 448-residue protein sequence, read N- to C-terminus: UDP-N-acetylmuramoyl-L-alanine--L-glutamate ligase (448 aa).

118–124 (GSKGKST) is an ATP binding site.

It belongs to the MurCDEF family. MurD2 subfamily.

The protein resides in the cytoplasm. It catalyses the reaction UDP-N-acetyl-alpha-D-muramoyl-L-alanine + L-glutamate + ATP = UDP-N-acetyl-alpha-D-muramoyl-L-alanyl-L-glutamate + ADP + phosphate + H(+). The protein operates within cell wall biogenesis; peptidoglycan biosynthesis. Its function is as follows. Cell wall formation. Catalyzes the addition of L-glutamate to the nucleotide precursor UDP-N-acetylmuramoyl-L-alanine. The chain is UDP-N-acetylmuramoyl-L-alanine--L-glutamate ligase from Salinispora tropica (strain ATCC BAA-916 / DSM 44818 / JCM 13857 / NBRC 105044 / CNB-440).